Consider the following 332-residue polypeptide: MIITVLGAGSWGTTLAVLLANKGYAVSLWAHRPDFAQELARTRENVKYLPGVTFPDGLEIAQDINAAATDADVIVAAVPSQAVRETMELLAGINLDGKLMVNVAKGIELGSGKRLSEVILETLSGVDPSMVSVLYGPSHAEEVSGLQPTTVVAASSNLDTAKRVQEIFHTRMFRVYVNTDIVGVEIAGSVKNIIAIAAGIADGIGFGDNAKAAIITRGLAEISRLSAAMGGDPMTVSGLSGIGDLVVTCLSKHSRNRYVGEQIGKGRSLDDVISHMNMVAEGVLTTKAVVELSNRLGVDMPITRTVYAMLFEHKPVEDAILDLMTRDPKPEL.

5 residues coordinate NADPH: S10, W11, H31, R32, and K105. The sn-glycerol 3-phosphate site is built by K105, G136, and S138. A140 is an NADPH binding site. Sn-glycerol 3-phosphate contacts are provided by K191, D244, S254, R255, and N256. The Proton acceptor role is filled by K191. R255 contacts NADPH. NADPH is bound by residues V279 and E281.

It belongs to the NAD-dependent glycerol-3-phosphate dehydrogenase family.

It localises to the cytoplasm. It catalyses the reaction sn-glycerol 3-phosphate + NAD(+) = dihydroxyacetone phosphate + NADH + H(+). It carries out the reaction sn-glycerol 3-phosphate + NADP(+) = dihydroxyacetone phosphate + NADPH + H(+). It functions in the pathway membrane lipid metabolism; glycerophospholipid metabolism. In terms of biological role, catalyzes the reduction of the glycolytic intermediate dihydroxyacetone phosphate (DHAP) to sn-glycerol 3-phosphate (G3P), the key precursor for phospholipid synthesis. This is Glycerol-3-phosphate dehydrogenase [NAD(P)+] from Prosthecochloris aestuarii (strain DSM 271 / SK 413).